The primary structure comprises 344 residues: MAVSVSAPVLSLCYNQSGELSRSLGYRLPKKVGFSSGRRSVSYIGFGAEKVGRFRVRVPICRAVPPLLFKDLDADDFRHPFDKQNTLLLRAIPGLNEFGKALLGSMTEQIMLLENIGTSVLVSKNQLSDLHGLLVEAAEILNIEAPDLYVRQSPVPNAYTLAISGKKPFIVVHTSLIELLTSAELQAVLAHELGHLKCDHGVWLTFANILTLGAYTVPAFGQMIARTLEEQLLRWLRSAELTCDRAALLVAQDPKVVVSVLMKLAGGCPSIADQLNVDAFLEQARSYDKASSSPLGWYIRNAQTSQLSHPLPVLRAREIDEWSRSLEYKSLLKRANRKSTVQKV.

A chloroplast-targeting transit peptide spans 1–47 (MAVSVSAPVLSLCYNQSGELSRSLGYRLPKKVGFSSGRRSVSYIGFG). 2 helical membrane-spanning segments follow: residues 102–122 (LLGS…SVLV) and 169–189 (FIVV…QAVL). His191 lines the Zn(2+) pocket. The active site involves Glu192. A Zn(2+)-binding site is contributed by His195. The chain crosses the membrane as a helical span at residues 201–221 (GVWLTFANILTLGAYTVPAFG). Zn(2+) is bound at residue Glu240. Residues 256–272 (VVVSVLMKLAGGCPSIA) traverse the membrane as a helical segment.

The protein belongs to the peptidase M48 family. M48D subfamily. Interacts with plastoglobule (PG) core proteins ABC1K3, PES1 and CCD4. Requires Zn(2+) as cofactor. Mostly expressed in flowers (e.g. sepals, petals and stamen), seeds, leaves and cotyledons.

The protein localises to the plastid. The protein resides in the chloroplast. It localises to the plastoglobule. It is found in the chloroplast membrane. Its function is as follows. Metalloendopeptidase with a Zn-dependent proteolytic activity and substrate cleavage upstream of hydrophobic residues. Positive regulator of senescence, probably by degrading CCD4, thus participating in the controlled removal of carotenoids from the thylakoid membrane during the senescence process. The protein is Plastoglobule-localized metallopeptidase 48, chloroplastic of Arabidopsis thaliana (Mouse-ear cress).